The chain runs to 301 residues: Probable alpha-L-glutamate ligase 2 (301 aa).

One can recognise an ATP-grasp domain in the interval 104–287; the sequence is LQLLSRKGIG…VTEPIVEYIE (184 aa). ATP contacts are provided by residues Lys-141, 178–179, Asp-187, and 211–213; these read EY and RSN. Residues Asp-248, Glu-260, and Asn-262 each coordinate Mg(2+). Mn(2+)-binding residues include Asp-248, Glu-260, and Asn-262.

The protein belongs to the RimK family. The cofactor is Mg(2+). Mn(2+) is required as a cofactor.

This Shewanella baltica (strain OS195) protein is Probable alpha-L-glutamate ligase 2.